A 224-amino-acid polypeptide reads, in one-letter code: Ribose-5-phosphate isomerase A (224 aa).

Residues Thr-26–Thr-29, Asp-82–Asp-85, and Lys-95–Gly-98 each bind substrate. The Proton acceptor role is filled by Glu-104. Lys-122 is a substrate binding site.

This sequence belongs to the ribose 5-phosphate isomerase family. As to quaternary structure, homodimer.

It carries out the reaction aldehydo-D-ribose 5-phosphate = D-ribulose 5-phosphate. Its pathway is carbohydrate degradation; pentose phosphate pathway; D-ribose 5-phosphate from D-ribulose 5-phosphate (non-oxidative stage): step 1/1. Catalyzes the reversible conversion of ribose-5-phosphate to ribulose 5-phosphate. This Lactococcus lactis subsp. cremoris (strain SK11) protein is Ribose-5-phosphate isomerase A.